The primary structure comprises 640 residues: uncharacterized protein (640 aa).

Positions 184 to 328 constitute a TIR domain; the sequence is VKRDTIFIIK…KVQRSIDTMI (145 aa). The disordered stretch occupies residues 613–640; sequence LPNDLDDEDEELDDSTLGRPDSDEEGGE. Residues 616 to 626 are compositionally biased toward acidic residues; that stretch reads DLDDEDEELDD.

This is an uncharacterized protein from Sinorhizobium fredii (strain NBRC 101917 / NGR234).